Consider the following 1522-residue polypeptide: Dicer-like protein 1 (1522 aa).

Over residues 1-12 (MTWAGDVEEQDD) the composition is skewed to acidic residues. Residues 1–37 (MTWAGDVEEQDDYFSCSDVSTSGDRRKRAPQTVTQEE) are disordered. The Helicase ATP-binding domain maps to 76–258 (LFLRAKMQNT…EHVREAAREL (183 aa)). 89–96 (LDTGTGKT) provides a ligand contact to ATP. The short motif at 202-205 (DEAH) is the DEAH box element. Residues 408–576 (WLNLYYERTT…DVEQEKAELI (169 aa)) form the Helicase C-terminal domain. One can recognise a Dicer dsRNA-binding fold domain in the interval 600–700 (SLSILSHFVA…LPTISKYLPA (101 aa)). Residues 859-980 (PFWKWSPQSR…ICPEPLHISN (122 aa)) form the PAZ domain. 2 RNase III domains span residues 995–1166 (IIHR…MQHH) and 1222–1373 (AHKI…VDSE). Mg(2+) is bound by residues Glu-1262, Asp-1359, and Glu-1362. The region spanning 1409–1478 (TRLSRLLSIN…SHAALEKLEG (70 aa)) is the DRBM domain. Positions 1421, 1449, 1490, and 1492 each coordinate Zn(2+).

This sequence belongs to the helicase family. Dicer subfamily. The cofactor is Mg(2+). Mn(2+) serves as cofactor.

Its function is as follows. Dicer-like endonuclease involved in cleaving double-stranded RNA in the RNA interference (RNAi) pathway. Produces 21 to 25 bp dsRNAs (siRNAs) which target the selective destruction of homologous RNAs leading to sequence-specific suppression of gene expression, called post-transcriptional gene silencing (PTGS). Part of a broad host defense response against viral infection and transposons. This is Dicer-like protein 1 (DCL1) from Phaeosphaeria nodorum (strain SN15 / ATCC MYA-4574 / FGSC 10173) (Glume blotch fungus).